A 158-amino-acid chain; its full sequence is Transcription elongation factor GreA (158 aa).

Residues 53 to 73 (EQQGFIEGRIKEIEAKLSNAQ) adopt a coiled-coil conformation.

It belongs to the GreA/GreB family.

Functionally, necessary for efficient RNA polymerase transcription elongation past template-encoded arresting sites. The arresting sites in DNA have the property of trapping a certain fraction of elongating RNA polymerases that pass through, resulting in locked ternary complexes. Cleavage of the nascent transcript by cleavage factors such as GreA or GreB allows the resumption of elongation from the new 3'terminus. GreA releases sequences of 2 to 3 nucleotides. In Thioalkalivibrio sulfidiphilus (strain HL-EbGR7), this protein is Transcription elongation factor GreA.